Here is a 115-residue protein sequence, read N- to C-terminus: uncharacterized protein (115 aa).

Residues 1-29 (MKKAMAILAVLAAAAVICGLLFFHNDVTD) form the signal peptide.

This is an uncharacterized protein from Bacillus subtilis (strain 168).